The sequence spans 475 residues: uncharacterized protein (475 aa).

A helical membrane pass occupies residues 7-28; the sequence is HVISIFETLGAYFINIFYNFLY. Residues N73, N83, and N195 are each glycosylated (N-linked (GlcNAc...) asparagine; by host). Positions 183 to 233 form a coiled coil; it reads ELEETYARLSSYNRSLLHQIEELTSEKKSLLADLSTLRKKYEKRQSEYRRL. Positions 295 to 305 are enriched in polar residues; sequence SQELTSKSPNN. The interval 295–324 is disordered; it reads SQELTSKSPNNYPVPHSRTIVSKPPDNYPV. N450 and N460 each carry an N-linked (GlcNAc...) asparagine; by host glycan.

This sequence belongs to the asfivirus B475L family.

It is found in the host membrane. This is an uncharacterized protein from Ornithodoros (relapsing fever ticks).